We begin with the raw amino-acid sequence, 130 residues long: Capsid protein (130 aa).

The interval Glu-32–Ile-105 is viral RNA-binding.

Belongs to the Leviviricetes capsid protein family. As to quaternary structure, homodimer. The capsid proteins form dimers that assemble by group of 5. Twelve such pentamers are linked together with free dimers. The homodimers binds to the viral RNA via an operator hairpin, but also to many other RNA sequences in the viral genome; this interaction probably shifts the virus from the replicative to the assembly phase and ensures specific encapsidation of the viral genome.

Its subcellular location is the virion. Its function is as follows. Capsid protein self-assembles to form an icosahedral capsid with a T=3 symmetry, about 26 nm in diameter, and consisting of 89 capsid proteins dimers (178 capsid proteins). Involved in viral genome encapsidation through the interaction between a capsid protein dimer and the multiple packaging signals present in the RNA genome. The capsid also contains 1 copy of the A2 maturation protein. Functionally, acts as a translational repressor of viral replicase synthesis late in infection. This latter function is the result of capsid protein interaction with an RNA hairpin which contains the replicase ribosome-binding site. This is Capsid protein from Escherichia coli (Bacteriophage MS2).